Consider the following 333-residue polypeptide: Diacylglycerol acyltransferase/mycolyltransferase Ag85C (333 aa).

The signal sequence occupies residues 1–44 (MKFLQQMRKLFGLAAKFPARLTIAVIGTALLAGLVGVVGDTAIA). 86–87 (LR) is a binding site for substrate. The fibronectin-binding stretch occupies residues 102–112 (FEEYYHSGLSV). Residues Ser170 and Asn198 each coordinate substrate. Ser170 acts as the Nucleophile in catalysis. Residue Glu274 is part of the active site. Residues 276 to 279 (LTLS) and 306 to 308 (HSW) contribute to the substrate site. His306 is a catalytic residue.

This sequence belongs to the mycobacterial A85 antigen family. In terms of assembly, homodimer.

It localises to the secreted. It carries out the reaction an acyl-CoA + a 1,2-diacyl-sn-glycerol = a triacyl-sn-glycerol + CoA. It catalyses the reaction 2 alpha,alpha'-trehalose 6-mycolate = alpha,alpha'-trehalose 6,6'-bismycolate + alpha,alpha-trehalose. Its function is as follows. The antigen 85 proteins (FbpA, FbpB, FbpC) are responsible for the high affinity of mycobacteria to fibronectin, a large adhesive glycoprotein, which facilitates the attachment of M.tuberculosis to murine alveolar macrophages (AMs). They also help to maintain the integrity of the cell wall by catalyzing the transfer of mycolic acids to cell wall arabinogalactan and through the synthesis of alpha,alpha-trehalose dimycolate (TDM, cord factor). They catalyze the transfer of a mycoloyl residue from one molecule of alpha,alpha-trehalose monomycolate (TMM) to another TMM, leading to the formation of TDM. This Mycobacterium leprae (strain TN) protein is Diacylglycerol acyltransferase/mycolyltransferase Ag85C (fbpC).